The chain runs to 553 residues: Urocanate hydratase (553 aa).

NAD(+) is bound by residues 45-46 (GG), Gln-123, 169-171 (GMG), Asp-189, Arg-194, 235-236 (NA), 256-260 (QTSAH), 266-267 (YV), Tyr-315, and Gly-485.

It belongs to the urocanase family. The cofactor is NAD(+).

It is found in the cytoplasm. It catalyses the reaction 4-imidazolone-5-propanoate = trans-urocanate + H2O. The protein operates within amino-acid degradation; L-histidine degradation into L-glutamate; N-formimidoyl-L-glutamate from L-histidine: step 2/3. Functionally, catalyzes the conversion of urocanate to 4-imidazolone-5-propionate. The protein is Urocanate hydratase of Staphylococcus aureus (strain Mu50 / ATCC 700699).